The following is a 362-amino-acid chain: 2-oxoglutarate-dependent dioxygenase lolO2 (362 aa).

The 114-residue stretch at 199–312 folds into the Fe2OG dioxygenase domain; it reads TWNYFLGQPV…RYSLVFFGHL (114 aa). Fe cation contacts are provided by histidine 222, aspartate 224, and histidine 280. Residue arginine 303 participates in 2-oxoglutarate binding.

Belongs to the iron/ascorbate-dependent oxidoreductase family. The cofactor is Fe(2+).

It participates in alkaloid biosynthesis. In terms of biological role, 2-oxoglutarate-dependent dioxygenase; part of the gene cluster that mediates the biosynthesis of loline alkaloids, potent insecticidal agents composed of a pyrrolizidine ring system and an uncommon ether bridge linking carbons 2 and 7. Lolines are structurally differentiated by the various modifications of the L-amino group and include norloline, loline, N-methylloline, N-acetylloline, N-acetylnorloline, and N-formylloline. The first committed step is the condensation of O-acetyl-L-homoserine (derived from L-aspartic acid) and L-proline, probably catalyzed by the gamma-type pyridoxal 5'-phosphate(PLP)-dependent enzyme lolC, to give the diamino diacid, NACPP. Ensuing cyclization, decarboxylation, and acetylation steps yield 1-exo-acetamidopyrrolizidine (AcAP). LolO is required for installation of the ether bridge upon the pathway intermediate, 1-exo-acetamidopyrrolizidine (AcAP). In sequential 2-oxoglutarate- and O(2)-consuming steps, lolO removes hydrogens from C2 and C7 of AcAP to form both carbon-oxygen bonds in N-acetylnorloline (NANL), the precursor to all other lolines. The enzymes lolD, lolE, lolF and lolT have also been proposed to be involved in the ether-bridge installation. Further processing of the exocyclic moiety of NANL by fungal N-acetamidase (LolN), methyltransferase (LolM), and cytochrome P450 (LolP) enzymes, with occasional involvement of a plant acetyltransferase, generates the other known lolines. LolN transforms NANL to norlonine which is monomethylated and dimethylated to respectively lonine and N-methyllonine (NML) by lolM. LolP catalyzes hydroxylation of the methyl group in N-methylloline (NML) and further oxygenation to N-formylloline (NFL). A plant acetyltransferase is responsible for the acetylation of loline to form N-acetylloline (NAL). LolA might interact with aspartate kinase to prevent feedback inhibition of its activity by these end products and thereby promote production of L-homoserine from L-aspartate. In Epichloe uncinata (Endophyte fungus), this protein is 2-oxoglutarate-dependent dioxygenase lolO2.